The sequence spans 330 residues: tRNA U34 carboxymethyltransferase (330 aa).

Residues Lys-91, Trp-105, Lys-110, Gly-130, 152-154, 181-182, Met-196, Tyr-200, and Arg-315 each bind carboxy-S-adenosyl-L-methionine; these read DPS and IE.

The protein belongs to the class I-like SAM-binding methyltransferase superfamily. CmoB family. As to quaternary structure, homotetramer.

The enzyme catalyses carboxy-S-adenosyl-L-methionine + 5-hydroxyuridine(34) in tRNA = 5-carboxymethoxyuridine(34) in tRNA + S-adenosyl-L-homocysteine + H(+). Its function is as follows. Catalyzes carboxymethyl transfer from carboxy-S-adenosyl-L-methionine (Cx-SAM) to 5-hydroxyuridine (ho5U) to form 5-carboxymethoxyuridine (cmo5U) at position 34 in tRNAs. This Shewanella frigidimarina (strain NCIMB 400) protein is tRNA U34 carboxymethyltransferase.